We begin with the raw amino-acid sequence, 184 residues long: Phosphorelay intermediate protein YPD1 (184 aa).

Positions 30-125 (EEGFSKSLVE…SAENVAVNDG (96 aa)) constitute an HPt domain. The residue at position 69 (histidine 69) is a Phosphohistidine. The disordered stretch occupies residues 120-152 (VAVNDGETNPENGSNGNETSNNKTNTSNIPDES). Low complexity predominate over residues 125–147 (GETNPENGSNGNETSNNKTNTSN).

This sequence belongs to the YPD1 family.

The protein resides in the cytoplasm. It localises to the nucleus. Functionally, phosphorelay intermediate protein that is part of the bifurcated SLN1-YPD1-SKN7/SSK1 two-component regulatory system, which controls activity of the HOG1 pathway and gene expression in response to oxidative stress and probably to changes in the osmolarity of the extracellular environment. Catalyzes the phosphoryl group transfer from the membrane-bound histidine kinase SLN1 to two distinct response regulators SSK1 and SKN7. The polypeptide is Phosphorelay intermediate protein YPD1 (YPD1) (Candida albicans (strain SC5314 / ATCC MYA-2876) (Yeast)).